Reading from the N-terminus, the 393-residue chain is CCA-adding enzyme (393 aa).

ATP-binding residues include Gly-27 and Arg-30. CTP is bound by residues Gly-27 and Arg-30. Residues Asp-40 and Asp-42 each coordinate Mg(2+). Residues Arg-111, Asp-154, Arg-157, Arg-160, and Arg-163 each contribute to the ATP site. Residues Arg-111, Asp-154, Arg-157, Arg-160, and Arg-163 each coordinate CTP.

Belongs to the tRNA nucleotidyltransferase/poly(A) polymerase family. Bacterial CCA-adding enzyme type 3 subfamily. As to quaternary structure, homodimer. It depends on Mg(2+) as a cofactor.

The catalysed reaction is a tRNA precursor + 2 CTP + ATP = a tRNA with a 3' CCA end + 3 diphosphate. It carries out the reaction a tRNA with a 3' CCA end + 2 CTP + ATP = a tRNA with a 3' CCACCA end + 3 diphosphate. In terms of biological role, catalyzes the addition and repair of the essential 3'-terminal CCA sequence in tRNAs without using a nucleic acid template. Adds these three nucleotides in the order of C, C, and A to the tRNA nucleotide-73, using CTP and ATP as substrates and producing inorganic pyrophosphate. tRNA 3'-terminal CCA addition is required both for tRNA processing and repair. Also involved in tRNA surveillance by mediating tandem CCA addition to generate a CCACCA at the 3' terminus of unstable tRNAs. While stable tRNAs receive only 3'-terminal CCA, unstable tRNAs are marked with CCACCA and rapidly degraded. This chain is CCA-adding enzyme, found in Listeria monocytogenes serovar 1/2a (strain ATCC BAA-679 / EGD-e).